We begin with the raw amino-acid sequence, 130 residues long: MAKSLRSKWKRKMRAEKRKKNAPRELNRLKSILRVDGDALMKDVEEIATVVVAKPRQEKMQCEEGRCDGADEEKDDMKMETEIKRNRKTLLDQHGQYPVWMNQRQRKRLKAKREKKRGKSRAKAAKGLAW.

Positions 1-21 (MAKSLRSKWKRKMRAEKRKKN) are enriched in basic residues. Disordered regions lie at residues 1–23 (MAKS…KNAP) and 57–76 (QEKM…EKDD). The stretch at 10–78 (KRKMRAEKRK…GADEEKDDMK (69 aa)) forms a coiled coil. K78 participates in a covalent cross-link: Glycyl lysine isopeptide (Lys-Gly) (interchain with G-Cter in SUMO2). The segment covering 104–124 (RQRKRLKAKREKKRGKSRAKA) has biased composition (basic residues). Positions 104–130 (RQRKRLKAKREKKRGKSRAKAAKGLAW) are disordered.

Belongs to the learning-associated protein family. In terms of assembly, interacts with CTCF, MYO1C and with the transcriptional machinery, including RNA polymerase II and TBP. In terms of tissue distribution, widely expressed, with high levels in testis and spleen and low levels in heart. In the brain, expressed in the cortex and hippocampus, and at very low levels in the cerebellum.

Its subcellular location is the nucleus. The protein resides in the nucleolus. The protein localises to the chromosome. Its function is as follows. In hippocampal neurons, regulates dendritic and spine growth and synaptic transmission. The protein is Protein LLP homolog (Llph) of Mus musculus (Mouse).